Here is a 306-residue protein sequence, read N- to C-terminus: Protein YIPF1 (306 aa).

Residues 1–119 (MAAVDDLQFE…VRLYIRSNPD (119 aa)) lie on the Cytoplasmic side of the membrane. A disordered region spans residues 14-62 (NAATSLTANPDATTVNIEDPGETPKHQSGSPRGSGREEDDELLGNDDSD). A compositionally biased stretch (polar residues) spans 15 to 29 (AATSLTANPDATTVN). Residues 50–59 (EEDDELLGND) show a composition bias toward acidic residues. The chain crosses the membrane as a helical span at residues 120–140 (LYGPFWICATLVFAIAISGNL). The Lumenal portion of the chain corresponds to 141-162 (SNFLIHLGEKTYRYVPEFRKVS). The helical transmembrane segment at 163-183 (IAATTIYAYAWLVPLALWGFL) threads the bilayer. Topologically, residues 184–200 (MWRNSKVMNIVSYSFLE) are cytoplasmic. The chain crosses the membrane as a helical span at residues 201-221 (IVCVYGYSLFIYIPTAILWII). At 222–227 (PQKAVR) the chain is on the lumenal side. A helical transmembrane segment spans residues 228–248 (WILVMIALGISGSVLAMTFWP). Residues 249–256 (AVREDNRR) are Cytoplasmic-facing. Residues 257–277 (VALATIVTIVLLHMLLSVGCL) form a helical membrane-spanning segment. At 278 to 306 (AYFFDAPEMDHLPTTTATPNQTVAAAKSS) the chain is on the lumenal side. N-linked (GlcNAc...) asparagine glycosylation is present at Asn-297.

This sequence belongs to the YIP1 family. As to quaternary structure, interacts with YIPF6; this interaction may stabilize YIPF1. May also form a ternary complex with YIPF2 and YIPF6.

It localises to the golgi apparatus. The protein localises to the cis-Golgi network membrane. The protein resides in the trans-Golgi network membrane. It is found in the late endosome membrane. This Pongo abelii (Sumatran orangutan) protein is Protein YIPF1 (YIPF1).